Consider the following 355-residue polypeptide: MSLCTVEINLSTIKNNYLLLQDICKTSLVGAAVKANGYGLGAVQISKALIEENCRHFFVASSEEGVNLRNALGLDVNILVLNGVFEHDALELIEYNLTPVLNNLKQIEIWQKFSNLKNRLLSCYLHFNTGINRLGLSSDEIEQLINDRDLLKGLDLQYIISHLAISEEIDNPYNLEQLNRFKAYLQYFPNVKASLANSGGIFLGQDYHFDLARPGAALYGLNPLTKNPVTLKAPIIHLQNLTLDSHIGYNMTFTTKRDSVIATLPLGYADGFSRNFSNQGEVFINSRSVPIVGRVSMDLINIDVTDLPPSEIFLGQEAEIIGNYCTPDKIASIIGTIGYEVLTNLGSRYKRKYIG.

The Proton acceptor; specific for D-alanine role is filled by lysine 34. Lysine 34 bears the N6-(pyridoxal phosphate)lysine mark. Position 133 (arginine 133) interacts with substrate. The active-site Proton acceptor; specific for L-alanine is tyrosine 249. Methionine 297 is a substrate binding site.

This sequence belongs to the alanine racemase family. Pyridoxal 5'-phosphate is required as a cofactor.

It catalyses the reaction L-alanine = D-alanine. It participates in amino-acid biosynthesis; D-alanine biosynthesis; D-alanine from L-alanine: step 1/1. Catalyzes the interconversion of L-alanine and D-alanine. May also act on other amino acids. This chain is Alanine racemase (alr), found in Rickettsia africae (strain ESF-5).